The chain runs to 753 residues: Translation initiation factor IF-2 (753 aa).

The disordered stretch occupies residues 1–166; it reads MSEKPRRDTG…PVMRPRGPVA (166 aa). Composition is skewed to low complexity over residues 19–43, 71–81, and 102–122; these read STGQ…ATGA, NARPAAPANAR, and TPAP…TNTR. Basic and acidic residues predominate over residues 133 to 146; the sequence is PQPEEREREREAVL. The segment covering 153 to 162 has biased composition (low complexity); that stretch reads TTTRPVMRPR. Residues 249-418 form the tr-type G domain; sequence PRPPVVTIMG…LLVADLEDLR (170 aa). The tract at residues 258-265 is G1; sequence GHVDHGKT. 258–265 provides a ligand contact to GTP; it reads GHVDHGKT. A G2 region spans residues 283–287; it reads GITQH. A G3 region spans residues 304 to 307; that stretch reads DTPG. GTP-binding positions include 304–308 and 358–361; these read DTPGH and NKID. The G4 stretch occupies residues 358 to 361; the sequence is NKID. A G5 region spans residues 394 to 396; it reads SAR.

The protein belongs to the TRAFAC class translation factor GTPase superfamily. Classic translation factor GTPase family. IF-2 subfamily.

It is found in the cytoplasm. One of the essential components for the initiation of protein synthesis. Protects formylmethionyl-tRNA from spontaneous hydrolysis and promotes its binding to the 30S ribosomal subunits. Also involved in the hydrolysis of GTP during the formation of the 70S ribosomal complex. The chain is Translation initiation factor IF-2 from Chloroflexus aggregans (strain MD-66 / DSM 9485).